The following is a 142-amino-acid chain: uncharacterized protein (142 aa).

The tract at residues 1 to 31 is disordered; that stretch reads MSLPKKKKPEVEEEEKPEEEEEKEEEQEIDI. Residues 11 to 29 show a composition bias toward acidic residues; that stretch reads VEEEEKPEEEEEKEEEQEI.

This is an uncharacterized protein from Acidianus sp. F28 (AFV-2).